Here is a 306-residue protein sequence, read N- to C-terminus: Follistatin-related protein 1 (306 aa).

A signal peptide spans 1 to 18 (MWKRWLALALVAVAWVRA). The region spanning 28-51 (ICANVFCGAGRECAVTEKGEPTCL) is the Follistatin-like domain. Disulfide bonds link Cys-29–Cys-40, Cys-34–Cys-50, Cys-52–Cys-82, Cys-56–Cys-75, and Cys-64–Cys-96. The Kazal-like domain occupies 46 to 98 (GEPTCLCIEQCKPHKRPVCGSNGKTYLNHCELHRDACLTGSKIQVDYDGHCKE). An N-linked (GlcNAc...) asparagine glycan is attached at Asn-142. The EF-hand 1 domain maps to 142-176 (NYSEILDKYFKNFDNGDSRLDSSEFLKFVEQNETA). Position 163 is a phosphoserine (Ser-163). N-linked (GlcNAc...) asparagine glycans are attached at residues Asn-173 and Asn-178. In terms of domain architecture, EF-hand 2 spans 191–226 (LRGLCVDALIELSDENADWKLSFQEFLKCLNPSFNP). The VWFC domain occupies 231 to 285 (CALEDETYADGAETEVDCNRCVCACGNWVCTAMTCDGKNQKGAQTQTEEEMTRYV).

In terms of assembly, homodimer. Interacts with SCN10A. Interacts with DIP2A; DIP2A may act as a cell surface receptor for FSTL1. Interacts with BMP4. Interacts with CD14; this interaction promotes TL4-mediated signaling cascade.

Its subcellular location is the secreted. Functionally, secreted glycoprotein that is involved in various physiological processes, such as angiogenesis, regulation of the immune response, cell proliferation and differentiation. Plays a role in the development of the central nervous system, skeletal system, lungs, and ureter. Promotes endothelial cell survival, migration and differentiation into network structures in an AKT-dependent manner. Also promotes survival of cardiac myocytes. Initiates various signaling cascades by activating different receptors on the cell surface such as DIP2A, TLR4 or BMP receptors. The sequence is that of Follistatin-related protein 1 (FSTL1) from Pongo abelii (Sumatran orangutan).